Here is a 688-residue protein sequence, read N- to C-terminus: Polyribonucleotide nucleotidyltransferase (688 aa).

Residues D484 and D490 each contribute to the Mg(2+) site. The KH domain maps to P550–I609. The region spanning D626–A688 is the S1 motif domain.

It belongs to the polyribonucleotide nucleotidyltransferase family. Mg(2+) is required as a cofactor.

It localises to the cytoplasm. The enzyme catalyses RNA(n+1) + phosphate = RNA(n) + a ribonucleoside 5'-diphosphate. In terms of biological role, involved in mRNA degradation. Catalyzes the phosphorolysis of single-stranded polyribonucleotides processively in the 3'- to 5'-direction. This Helicobacter acinonychis (strain Sheeba) protein is Polyribonucleotide nucleotidyltransferase.